Consider the following 529-residue polypeptide: uncharacterized protein (529 aa).

The 254-residue stretch at Asp157–Asp410 folds into the Radical SAM core domain. Residues Cys171, Cys176, and Cys179 each coordinate [4Fe-4S] cluster.

[4Fe-4S] cluster serves as cofactor.

This is an uncharacterized protein from Archaeoglobus fulgidus (strain ATCC 49558 / DSM 4304 / JCM 9628 / NBRC 100126 / VC-16).